The sequence spans 365 residues: Methylthioribose-1-phosphate isomerase (365 aa).

D255 acts as the Proton donor in catalysis.

This sequence belongs to the eIF-2B alpha/beta/delta subunits family. MtnA subfamily.

The protein localises to the cytoplasm. The protein resides in the nucleus. The catalysed reaction is 5-(methylsulfanyl)-alpha-D-ribose 1-phosphate = 5-(methylsulfanyl)-D-ribulose 1-phosphate. It functions in the pathway amino-acid biosynthesis; L-methionine biosynthesis via salvage pathway; L-methionine from S-methyl-5-thio-alpha-D-ribose 1-phosphate: step 1/6. Its function is as follows. Catalyzes the interconversion of methylthioribose-1-phosphate (MTR-1-P) into methylthioribulose-1-phosphate (MTRu-1-P). In Drosophila willistoni (Fruit fly), this protein is Methylthioribose-1-phosphate isomerase.